The primary structure comprises 207 residues: Large ribosomal subunit protein bL25 (207 aa).

This sequence belongs to the bacterial ribosomal protein bL25 family. CTC subfamily. Part of the 50S ribosomal subunit; part of the 5S rRNA/L5/L18/L25 subcomplex. Contacts the 5S rRNA. Binds to the 5S rRNA independently of L5 and L18.

Functionally, this is one of the proteins that binds to the 5S RNA in the ribosome where it forms part of the central protuberance. This is Large ribosomal subunit protein bL25 from Rhizorhabdus wittichii (strain DSM 6014 / CCUG 31198 / JCM 15750 / NBRC 105917 / EY 4224 / RW1) (Sphingomonas wittichii).